The sequence spans 541 residues: Solute carrier family 2, facilitated glucose transporter member 10 (541 aa).

Residues 1–15 lie on the Cytoplasmic side of the membrane; the sequence is MGHSPPVLPLCASVS. Residues 16–36 form a helical membrane-spanning segment; the sequence is LLGGLTFGYELAVISGALLPL. Over 37-48 the chain is Extracellular; sequence QLDFGLSCLEQE. Residues 49–69 traverse the membrane as a helical segment; the sequence is FLVGSLLLGALLASLVGGFLI. The Cytoplasmic portion of the chain corresponds to 70–77; the sequence is DCYGRKQA. Residues 78–98 form a helical membrane-spanning segment; sequence ILGSNLVLLAGSLTLGLAGSL. At 99 to 106 the chain is on the extracellular side; that stretch reads AWLVLGRA. A helical transmembrane segment spans residues 107–127; sequence VVGFAISLSSMACCIYVSELV. At 128 to 134 the chain is on the cytoplasmic side; sequence GPRQRGV. The helical transmembrane segment at 135-155 threads the bilayer; sequence LVSLYEAGITVGILLSYALNY. The Extracellular segment spans residues 156-166; it reads ALAGTPWGWRH. The chain crosses the membrane as a helical span at residues 167–187; that stretch reads MFGWATAPAVLQSLSLLFLPA. Residues 188 to 233 lie on the Cytoplasmic side of the membrane; the sequence is GTDETATHKDLIPLQGGEAPKLGPGRPRYSFLDLFRARDNMRGRTT. The helical transmembrane segment at 234 to 254 threads the bilayer; sequence VGLGLVLFQQLTGQPNVLCYA. D-glucose is bound at residue 242–243; that stretch reads QQ. The Extracellular segment spans residues 255 to 269; that stretch reads STIFSSVGFHGGSSA. Residues 270–290 form a helical membrane-spanning segment; sequence VLASVGLGAVKVAATLTAMGL. At 291–298 the chain is on the cytoplasmic side; the sequence is VDRAGRRA. A helical transmembrane segment spans residues 299–319; sequence LLLAGCALMALSVSGIGLVSF. The Extracellular portion of the chain corresponds to 320–414; it reads AVPMDSGPSC…HALLRWTALL (95 aa). N-linked (GlcNAc...) asparagine glycosylation is present at N334. Positions 340–388 are disordered; the sequence is GLPGDSGLLQDSSLPPIPRTNEDQREPILSTAKKTKPHPRSGDPSAPPR. The chain crosses the membrane as a helical span at residues 415 to 435; sequence CLMVFVSAFSFGFGPVTWLVL. Residue W432 participates in D-glucose binding. The Cytoplasmic segment spans residues 436-445; it reads SEIYPVEIRG. The chain crosses the membrane as a helical span at residues 446 to 466; the sequence is RAFAFCNSFNWAANLFISLSF. At 467 to 476 the chain is on the extracellular side; sequence LDLIGTIGLS. A helical membrane pass occupies residues 477 to 497; the sequence is WTFLLYGLTAVLGLGFIYLFV. Residues 498 to 541 lie on the Cytoplasmic side of the membrane; it reads PETKGQSLAEIDQQFQKRRFTLSFGHRQNSTGIPYSRIEISAAS.

This sequence belongs to the major facilitator superfamily. Sugar transporter (TC 2.A.1.1) family. Glucose transporter subfamily. In terms of tissue distribution, widely expressed; highest levels in liver and pancreas.

It localises to the endomembrane system. The protein localises to the cytoplasm. Its subcellular location is the perinuclear region. It carries out the reaction D-glucose(out) = D-glucose(in). Facilitative glucose transporter required for the development of the cardiovascular system. The polypeptide is Solute carrier family 2, facilitated glucose transporter member 10 (Homo sapiens (Human)).